Reading from the N-terminus, the 117-residue chain is Large ribosomal subunit protein uL22 (117 aa).

The protein belongs to the universal ribosomal protein uL22 family. Part of the 50S ribosomal subunit.

In terms of biological role, this protein binds specifically to 23S rRNA; its binding is stimulated by other ribosomal proteins, e.g. L4, L17, and L20. It is important during the early stages of 50S assembly. It makes multiple contacts with different domains of the 23S rRNA in the assembled 50S subunit and ribosome. The globular domain of the protein is located near the polypeptide exit tunnel on the outside of the subunit, while an extended beta-hairpin is found that lines the wall of the exit tunnel in the center of the 70S ribosome. The polypeptide is Large ribosomal subunit protein uL22 (Lacticaseibacillus casei (strain BL23) (Lactobacillus casei)).